Consider the following 266-residue polypeptide: MIKLNNVTFRYRPSDENPAINNVSLEIKKGQYVAILGHNGSGKSTLSKILVALLKPQKGELFIDGIQYSKENLKEIRKKIGIIFQNPDNQFIGSTVEDDIAFGLENKNISRDEMRTKVVEYAKVVDMEKHLSREPEYLSGGQKQRVAIASVLALDPEVIIFDEVTSMLDPKGKSKVIQIIKQIQADKDKTLISITHDMDEAILADTVLVFAKGKLVAAGSPKDILNEEKIIEIAKIASPFIYKISKHINGIEPTYVEEELISQICK.

Residues Ile-2–Ala-237 form the ABC transporter domain. Position 37 to 44 (Gly-37 to Ser-44) interacts with ATP.

Belongs to the ABC transporter superfamily. Energy-coupling factor EcfA family. Forms a stable energy-coupling factor (ECF) transporter complex composed of 2 membrane-embedded substrate-binding proteins (S component), 2 ATP-binding proteins (A component) and 2 transmembrane proteins (T component).

The protein localises to the cell membrane. In terms of biological role, ATP-binding (A) component of a common energy-coupling factor (ECF) ABC-transporter complex. Unlike classic ABC transporters this ECF transporter provides the energy necessary to transport a number of different substrates. The sequence is that of Energy-coupling factor transporter ATP-binding protein EcfA1 from Mycoplasmopsis synoviae (strain 53) (Mycoplasma synoviae).